We begin with the raw amino-acid sequence, 240 residues long: Protein GrpE (240 aa).

Residues M1–Q13 are compositionally biased toward polar residues. The segment at M1–W89 is disordered. Low complexity predominate over residues A20 to A38. Over residues E65–W89 the composition is skewed to basic and acidic residues.

The protein belongs to the GrpE family. In terms of assembly, homodimer.

Its subcellular location is the cytoplasm. Its function is as follows. Participates actively in the response to hyperosmotic and heat shock by preventing the aggregation of stress-denatured proteins, in association with DnaK and GrpE. It is the nucleotide exchange factor for DnaK and may function as a thermosensor. Unfolded proteins bind initially to DnaJ; upon interaction with the DnaJ-bound protein, DnaK hydrolyzes its bound ATP, resulting in the formation of a stable complex. GrpE releases ADP from DnaK; ATP binding to DnaK triggers the release of the substrate protein, thus completing the reaction cycle. Several rounds of ATP-dependent interactions between DnaJ, DnaK and GrpE are required for fully efficient folding. In Halorhodospira halophila (strain DSM 244 / SL1) (Ectothiorhodospira halophila (strain DSM 244 / SL1)), this protein is Protein GrpE.